The chain runs to 305 residues: Glutaminase (305 aa).

Residues S61, N113, E158, N165, Y189, Y241, and V259 each contribute to the substrate site.

This sequence belongs to the glutaminase family. Homotetramer.

It catalyses the reaction L-glutamine + H2O = L-glutamate + NH4(+). In Clostridium botulinum (strain Kyoto / Type A2), this protein is Glutaminase.